A 451-amino-acid polypeptide reads, in one-letter code: D(1A) dopamine receptor (451 aa).

At 1–22 (MTFNITSMDEDVLLTERESSFR) the chain is on the extracellular side. N-linked (GlcNAc...) asparagine glycosylation occurs at N4. Residues 23 to 48 (VLTGCFLSVLILSTLLGNTLVCAAVI) form a helical membrane-spanning segment. Over 49–59 (RFRHLRSKVTN) the chain is Cytoplasmic. The helical transmembrane segment at 60 to 86 (FFVISLAVSDLLVAVLVMPWKAVAEIA) threads the bilayer. Topologically, residues 87-95 (GFWPFGTFC) are extracellular. A disulfide bond links C95 and C185. A helical transmembrane segment spans residues 96-118 (NIWVAFDIMCSTASILNLCVISV). Residues 119–137 (DRYWAISSPFRYERKMTPK) lie on the Cytoplasmic side of the membrane. A helical membrane pass occupies residues 138–162 (VAFIMIGVAWTLSVLISFIPVQLNW). Residues 163-191 (HKAKTTSFFDLNITLHDRTMDNCDSSLNR) lie on the Extracellular side of the membrane. Residues 192–217 (TYAISSSLISFYIPVAIMIVTYTRIY) traverse the membrane as a helical segment. Residues 218–271 (RIAAKQIRRISALERAAVHAKNCQNSTSNRNSLDCQQPESSLKTSFKRETKVLK) lie on the Cytoplasmic side of the membrane. Residues 272-298 (TLSVIMGVFVCCWLPFFILNCIVPFCD) traverse the membrane as a helical segment. Topologically, residues 299-315 (PSLTTSGTEPFCISSTT) are extracellular. Residues 316 to 340 (FDVFVWFGWANSSLNPIIYAFNADF) form a helical membrane-spanning segment. Residues 341 to 451 (RKAFSNLLGC…PITQNGQPKT (111 aa)) are Cytoplasmic-facing. A lipid anchor (S-palmitoyl cysteine) is attached at C350.

It belongs to the G-protein coupled receptor 1 family. In terms of tissue distribution, brain.

The protein resides in the cell membrane. It localises to the cell projection. The protein localises to the cilium membrane. Functionally, dopamine receptor whose activity is mediated by G proteins which activate adenylyl cyclase. The sequence is that of D(1A) dopamine receptor (drd1) from Xenopus laevis (African clawed frog).